Consider the following 140-residue polypeptide: Nucleoside diphosphate kinase (140 aa).

6 residues coordinate ATP: lysine 11, phenylalanine 59, arginine 87, threonine 93, arginine 104, and asparagine 114. Histidine 117 (pros-phosphohistidine intermediate) is an active-site residue.

This sequence belongs to the NDK family. As to quaternary structure, homotetramer. It depends on Mg(2+) as a cofactor.

The protein localises to the cytoplasm. The catalysed reaction is a 2'-deoxyribonucleoside 5'-diphosphate + ATP = a 2'-deoxyribonucleoside 5'-triphosphate + ADP. It catalyses the reaction a ribonucleoside 5'-diphosphate + ATP = a ribonucleoside 5'-triphosphate + ADP. Functionally, major role in the synthesis of nucleoside triphosphates other than ATP. The ATP gamma phosphate is transferred to the NDP beta phosphate via a ping-pong mechanism, using a phosphorylated active-site intermediate. The polypeptide is Nucleoside diphosphate kinase (Chelativorans sp. (strain BNC1)).